The following is a 103-amino-acid chain: Phosphoribosyl-ATP pyrophosphatase (103 aa).

Belongs to the PRA-PH family.

The protein resides in the cytoplasm. It catalyses the reaction 1-(5-phospho-beta-D-ribosyl)-ATP + H2O = 1-(5-phospho-beta-D-ribosyl)-5'-AMP + diphosphate + H(+). It functions in the pathway amino-acid biosynthesis; L-histidine biosynthesis; L-histidine from 5-phospho-alpha-D-ribose 1-diphosphate: step 2/9. The polypeptide is Phosphoribosyl-ATP pyrophosphatase (hisE) (Rhodobacter capsulatus (strain ATCC BAA-309 / NBRC 16581 / SB1003)).